The chain runs to 206 residues: RNA pyrophosphohydrolase (206 aa).

The Nudix hydrolase domain maps to 6–150; sequence GYRPNVGIVI…KRDVYRKVMK (145 aa). Residues 38-59 carry the Nudix box motif; it reads GGINEGENIETAMYRELYEEVG. The segment covering 162–191 has biased composition (basic and acidic residues); sequence KPETVEKPRVERTEKRDFQKRDNQKREFRK. The tract at residues 162–206 is disordered; the sequence is KPETVEKPRVERTEKRDFQKRDNQKREFRKSARMWNNSHQKGKAQ.

It belongs to the Nudix hydrolase family. RppH subfamily. The cofactor is a divalent metal cation.

Accelerates the degradation of transcripts by removing pyrophosphate from the 5'-end of triphosphorylated RNA, leading to a more labile monophosphorylated state that can stimulate subsequent ribonuclease cleavage. This is RNA pyrophosphohydrolase from Actinobacillus pleuropneumoniae serotype 7 (strain AP76).